The following is a 211-amino-acid chain: Imidazole glycerol phosphate synthase subunit HisH (211 aa).

A Glutamine amidotransferase type-1 domain is found at 5–211 (SVALLDYGSG…QLLRNWVDSL (207 aa)). The active-site Nucleophile is Cys83. Active-site residues include His192 and Glu194.

As to quaternary structure, heterodimer of HisH and HisF.

It localises to the cytoplasm. The enzyme catalyses 5-[(5-phospho-1-deoxy-D-ribulos-1-ylimino)methylamino]-1-(5-phospho-beta-D-ribosyl)imidazole-4-carboxamide + L-glutamine = D-erythro-1-(imidazol-4-yl)glycerol 3-phosphate + 5-amino-1-(5-phospho-beta-D-ribosyl)imidazole-4-carboxamide + L-glutamate + H(+). It carries out the reaction L-glutamine + H2O = L-glutamate + NH4(+). Its pathway is amino-acid biosynthesis; L-histidine biosynthesis; L-histidine from 5-phospho-alpha-D-ribose 1-diphosphate: step 5/9. Its function is as follows. IGPS catalyzes the conversion of PRFAR and glutamine to IGP, AICAR and glutamate. The HisH subunit catalyzes the hydrolysis of glutamine to glutamate and ammonia as part of the synthesis of IGP and AICAR. The resulting ammonia molecule is channeled to the active site of HisF. The polypeptide is Imidazole glycerol phosphate synthase subunit HisH (Nocardia farcinica (strain IFM 10152)).